The following is a 91-amino-acid chain: Small ribosomal subunit protein bS18 (91 aa).

Belongs to the bacterial ribosomal protein bS18 family. Part of the 30S ribosomal subunit. Forms a tight heterodimer with protein bS6.

In terms of biological role, binds as a heterodimer with protein bS6 to the central domain of the 16S rRNA, where it helps stabilize the platform of the 30S subunit. In Burkholderia vietnamiensis (strain G4 / LMG 22486) (Burkholderia cepacia (strain R1808)), this protein is Small ribosomal subunit protein bS18.